Reading from the N-terminus, the 686-residue chain is XK-related protein 5 (686 aa).

A run of 5 helical transmembrane segments spans residues 33–53 (LLWGWLALAVLLPGFLVQALS), 205–225 (HFWVFVVAGAHWLVMTFWLVA), 239–259 (LFNLLVGAVYILCYLSFWDSP), 265–285 (VTFYMVMLLENTILLLLATDF), and 297–317 (IAGVLSGFLIGSVSLVIYYSL). Disordered regions lie at residues 340 to 362 (DKTERRASPRATDLAGKRTESSG), 444 to 470 (LQRKALSAQRELPSSSRHPSTLENSSA), and 490 to 589 (FASD…VGLA). 2 stretches are compositionally biased toward polar residues: residues 455 to 470 (LPSSSRHPSTLENSSA) and 490 to 509 (FASDQQDEAPTQNPAATQGE). Residues 523-536 (QGKGTGGQQRGGEG) show a composition bias toward gly residues. The segment covering 550–567 (VATSSQQEGSPATLQTAH) has biased composition (polar residues).

Belongs to the XK family.

The protein resides in the cell membrane. This is XK-related protein 5 from Pan troglodytes (Chimpanzee).